We begin with the raw amino-acid sequence, 2754 residues long: Neurobeachin-like protein 2 (2754 aa).

Disordered regions lie at residues 1298–1338 (TAGS…SEAP) and 1364–1438 (SVGS…QQTS). Pro residues-rich tracts occupy residues 1301–1323 (SPPP…PPTE) and 1388–1400 (TPSP…PFPA). The span at 1425–1437 (GDDTSNTSNPQQT) shows a compositional bias: polar residues. Ser1647 carries the post-translational modification Phosphoserine. The residue at position 1867 (Thr1867) is a Phosphothreonine. Positions 1915–2040 (EQREKLVLSA…VRNQVYSWLL (126 aa)) constitute a BEACH-type PH domain. The 293-residue stretch at 2053–2345 (RSPQEMLRAS…QLLKEPHPTR (293 aa)) folds into the BEACH domain. WD repeat units lie at residues 2386 to 2424 (LVLA…SWLP), 2448 to 2491 (RLLS…ALPR), 2494 to 2531 (LLSQ…VWRL), 2544 to 2582 (KPVQ…IHTV), 2589 to 2631 (AALR…TYSL), 2639 to 2674 (KLRA…ILQL), and 2682 to 2717 (PPLP…VVAG). Phosphoserine is present on residues Ser2739 and Ser2742.

This sequence belongs to the WD repeat neurobeachin family. As to expression, expressed in megakaryocytes.

The protein localises to the endoplasmic reticulum. Probably involved in thrombopoiesis. Plays a role in the development or secretion of alpha-granules, that contain several growth factors important for platelet biogenesis. The sequence is that of Neurobeachin-like protein 2 (NBEAL2) from Homo sapiens (Human).